We begin with the raw amino-acid sequence, 280 residues long: Bifunctional protein FolD (280 aa).

NADP(+) contacts are provided by residues glycine 166–serine 168 and serine 191.

Belongs to the tetrahydrofolate dehydrogenase/cyclohydrolase family. Homodimer.

The catalysed reaction is (6R)-5,10-methylene-5,6,7,8-tetrahydrofolate + NADP(+) = (6R)-5,10-methenyltetrahydrofolate + NADPH. The enzyme catalyses (6R)-5,10-methenyltetrahydrofolate + H2O = (6R)-10-formyltetrahydrofolate + H(+). It functions in the pathway one-carbon metabolism; tetrahydrofolate interconversion. Its function is as follows. Catalyzes the oxidation of 5,10-methylenetetrahydrofolate to 5,10-methenyltetrahydrofolate and then the hydrolysis of 5,10-methenyltetrahydrofolate to 10-formyltetrahydrofolate. In Marinomonas sp. (strain MWYL1), this protein is Bifunctional protein FolD.